Consider the following 280-residue polypeptide: Ycf3-interacting protein 1, chloroplastic (280 aa).

The N-terminal 62 residues, 1–62 (MTTQIFQLPL…NNRRFGSLIV (62 aa)), are a transit peptide targeting the chloroplast. A disordered region spans residues 75–103 (PVPLTLEQQEKEKQNRDDEEDEIDEGDVD). Over residues 91–103 (DDEEDEIDEGDVD) the composition is skewed to acidic residues. Residues 255-275 (ALYFVSALPVIIGISVVLILF) form a helical membrane-spanning segment.

The protein belongs to the Y3IP1/CEST family. As to quaternary structure, interacts with Ycf3. In terms of tissue distribution, expressed in cotyledons, rosette and cauline leaves, stems and sepals.

It localises to the plastid. It is found in the chloroplast thylakoid membrane. Its function is as follows. Nuclear genome-encoded factor that participates in photosystem I (PSI) biogenesis. Cooperates with the plastid genome-encoded protein PSI assembly Ycf3 in the assembly of stable PSI units in the thylakoid membrane. Involved in light-induced chloroplast development and growth. Involved in the plant response to abiotic and photooxidative stresses. May be involved in the suppression of photooxidative damage. The protein is Ycf3-interacting protein 1, chloroplastic of Arabidopsis thaliana (Mouse-ear cress).